A 231-amino-acid polypeptide reads, in one-letter code: Dephospho-CoA kinase (231 aa).

Residues 29–231 form the DPCK domain; sequence RVGLTGGIAS…IAGALRFDRR (203 aa). 37-42 is an ATP binding site; sequence ASGKST.

Belongs to the CoaE family.

Its subcellular location is the cytoplasm. It catalyses the reaction 3'-dephospho-CoA + ATP = ADP + CoA + H(+). The protein operates within cofactor biosynthesis; coenzyme A biosynthesis; CoA from (R)-pantothenate: step 5/5. In terms of biological role, catalyzes the phosphorylation of the 3'-hydroxyl group of dephosphocoenzyme A to form coenzyme A. This Cutibacterium acnes (strain DSM 16379 / KPA171202) (Propionibacterium acnes) protein is Dephospho-CoA kinase.